The primary structure comprises 234 residues: Triosephosphate isomerase (234 aa).

8 to 10 (NFK) serves as a coordination point for substrate. H90 (electrophile) is an active-site residue. The Proton acceptor role is filled by E159. G165 and S197 together coordinate substrate.

Belongs to the triosephosphate isomerase family. As to quaternary structure, homodimer.

It localises to the cytoplasm. The catalysed reaction is D-glyceraldehyde 3-phosphate = dihydroxyacetone phosphate. It functions in the pathway carbohydrate biosynthesis; gluconeogenesis. The protein operates within carbohydrate degradation; glycolysis; D-glyceraldehyde 3-phosphate from glycerone phosphate: step 1/1. Functionally, involved in the gluconeogenesis. Catalyzes stereospecifically the conversion of dihydroxyacetone phosphate (DHAP) to D-glyceraldehyde-3-phosphate (G3P). This chain is Triosephosphate isomerase, found in Helicobacter pylori (strain J99 / ATCC 700824) (Campylobacter pylori J99).